Here is a 798-residue protein sequence, read N- to C-terminus: MIKKIMTTCFGLVFGLCVFAVGLLAIAILATYPKLPSLDSLQHYQPKMPLTVYSADGKIIGIYGEQRREFTKIGDFPEVLRNAVIAAEDKRFYQHWGVDVWGVARAVVGNIVSGSMQSGASTITQQVAKNFYLSSEKTFTRKFNEALLAYKIEQSLSKDKILELYFNQIYLGQRAYGFASAAQIYFNKDVRDLTLAEAAMLAGLPKAPSAYNPIVNPERAKLRQKYILNNMLEEKMITLQQRDQALNEELHYERFVQKIDQSALYVAEMVRQELYEKYGEDAYTQGLKVYTTVRTDHQKAATEALRKALRNFDRGSSYRGAESYIDLGRDEDAEEAVSQYLSGLYTVDKMVPAVVLDVTKKKNVVIQLPGGKRVTLDRRALGFAARAVDNEKMGEDRIRRGAVIRVRNNGGRWAVVQEPLLQGALVSLDAKTGAVRALVGGYDFHSKTFNRATQAMRQPGSTFKPFVYSAALSKGMTASTMINDAPISLPGKGPNGSVWTPKNSDGRYSGYITLRQALTASKNMVSIRILMSIGVGYAQQYIRRFGFKPSELPVSLSMALGTGETTPLRIAEAYSVFANGGYRVSSYVIDKIYDSEGRLRAQMQPLVAGQNAPQAIDPRNAYIMYKIMQDVVRVGTARGASALGRSDIAGKTGTTNDNKDAWFVGFNPDVVTAVYIGFDKPKSMGRAGYGGTIAVPVWVDYMRFALKGRPGKGMKMPDGVVAGNGEYYMKEHMVTDPGLMLDNGGAAPQPSRRVKEDDGGAAEGGRQEADDESRQDMQETPVLPSNTDSKRQQLDSLF.

The Cytoplasmic segment spans residues 1-9 (MIKKIMTTC). A helical; Signal-anchor for type II membrane protein transmembrane segment spans residues 10 to 30 (FGLVFGLCVFAVGLLAIAILA). Topologically, residues 31–798 (TYPKLPSLDS…SKRQQLDSLF (768 aa)) are periplasmic. The interval 50-218 (LTVYSADGKI…SAYNPIVNPE (169 aa)) is transglycosylase. The active-site Proton donor; for transglycosylase activity is the Glu-88. Positions 378-700 (RRALGFAARA…GTIAVPVWVD (323 aa)) are transpeptidase. Ser-461 (acyl-ester intermediate; for transpeptidase activity) is an active-site residue. The segment at 739-798 (LMLDNGGAAPQPSRRVKEDDGGAAEGGRQEADDESRQDMQETPVLPSNTDSKRQQLDSLF) is disordered. Basic and acidic residues-rich tracts occupy residues 765 to 777 (GRQEADDESRQDM) and 788 to 798 (DSKRQQLDSLF).

In the N-terminal section; belongs to the glycosyltransferase 51 family. This sequence in the C-terminal section; belongs to the transpeptidase family.

Its subcellular location is the cell inner membrane. The catalysed reaction is [GlcNAc-(1-&gt;4)-Mur2Ac(oyl-L-Ala-gamma-D-Glu-L-Lys-D-Ala-D-Ala)](n)-di-trans,octa-cis-undecaprenyl diphosphate + beta-D-GlcNAc-(1-&gt;4)-Mur2Ac(oyl-L-Ala-gamma-D-Glu-L-Lys-D-Ala-D-Ala)-di-trans,octa-cis-undecaprenyl diphosphate = [GlcNAc-(1-&gt;4)-Mur2Ac(oyl-L-Ala-gamma-D-Glu-L-Lys-D-Ala-D-Ala)](n+1)-di-trans,octa-cis-undecaprenyl diphosphate + di-trans,octa-cis-undecaprenyl diphosphate + H(+). It carries out the reaction Preferential cleavage: (Ac)2-L-Lys-D-Ala-|-D-Ala. Also transpeptidation of peptidyl-alanyl moieties that are N-acyl substituents of D-alanine.. Its pathway is cell wall biogenesis; peptidoglycan biosynthesis. Its function is as follows. Cell wall formation. Synthesis of cross-linked peptidoglycan from the lipid intermediates. The enzyme has a penicillin-insensitive transglycosylase N-terminal domain (formation of linear glycan strands) and a penicillin-sensitive transpeptidase C-terminal domain (cross-linking of the peptide subunits). The protein is Penicillin-binding protein 1A (mrcA) of Neisseria lactamica.